A 471-amino-acid polypeptide reads, in one-letter code: Metal tolerance protein C1 (471 aa).

Residues 1–78 lie on the Cytoplasmic side of the membrane; it reads MGIIRFQILN…PGEEGEKIFR (78 aa). The helical transmembrane segment at 79–99 threads the bilayer; the sequence is LGLTADIGLSVAKALTGYLCG. Over 100 to 101 the chain is Vacuolar; that stretch reads ST. Residues 102 to 122 form a helical membrane-spanning segment; it reads AIIADAAHSVSDVVLSGVALV. The Cytoplasmic segment spans residues 123–144; that stretch reads SYRAANVPKDKEHPYGHGKFET. A helical membrane pass occupies residues 145–165; that stretch reads LGALGISAMLLATGSGIAWHA. Topologically, residues 166-192 are vacuolar; the sequence is LDLLSIALSAAPEVIHSGHHHGIDMNH. A helical membrane pass occupies residues 193 to 213; that stretch reads PILALTVTIASISIKEGLYWI. The Cytoplasmic segment spans residues 214 to 236; the sequence is TKRAGEKQGSGLMMANAWHHRSD. Residues 237 to 257 traverse the membrane as a helical segment; that stretch reads AISSLVALVGVGGSILGVNFL. At 258-423 the chain is on the vacuolar side; sequence DPLAGLVVST…RITPHLLHSK (166 aa). The chain crosses the membrane as a helical span at residues 424–444; it reads ILLQIVVAMPSTMSIQDVMIA. Residues 445-471 are Cytoplasmic-facing; the sequence is AEHAEKEILKAAPNVARVSIQLSLNSE.

Belongs to the cation diffusion facilitator (CDF) transporter (TC 2.A.4) family.

The protein localises to the vacuole membrane. In terms of biological role, involved in sequestration of excess metal in the cytoplasm into vacuoles to maintain metal homeostasis. The protein is Metal tolerance protein C1 (MTPC1) of Arabidopsis thaliana (Mouse-ear cress).